Reading from the N-terminus, the 316-residue chain is Thiamine-monophosphate kinase (316 aa).

Positions 26, 49, and 50 each coordinate Mg(2+). Aspartate 57 contributes to the substrate binding site. Aspartate 79 provides a ligand contact to Mg(2+). ATP is bound by residues tyrosine 109, 126-127 (GD), and arginine 151. A Mg(2+)-binding site is contributed by aspartate 127. Residue aspartate 198 coordinates Mg(2+). Serine 200 serves as a coordination point for ATP. Aspartate 201 provides a ligand contact to Mg(2+). Substrate contacts are provided by glutamate 251 and phenylalanine 305.

The protein belongs to the thiamine-monophosphate kinase family.

It catalyses the reaction thiamine phosphate + ATP = thiamine diphosphate + ADP. It participates in cofactor biosynthesis; thiamine diphosphate biosynthesis; thiamine diphosphate from thiamine phosphate: step 1/1. In terms of biological role, catalyzes the ATP-dependent phosphorylation of thiamine-monophosphate (TMP) to form thiamine-pyrophosphate (TPP), the active form of vitamin B1. In Rhodopirellula baltica (strain DSM 10527 / NCIMB 13988 / SH1), this protein is Thiamine-monophosphate kinase.